A 936-amino-acid chain; its full sequence is Bifunctional uridylyltransferase/uridylyl-removing enzyme (936 aa).

The uridylyltransferase stretch occupies residues 1–372 (MTIPRIRQPR…SIATLLMRKR (372 aa)). Positions 373–727 (NLGDFVLDGG…VLPDPERAVS (355 aa)) are uridylyl-removing. One can recognise an HD domain in the interval 488–610 (TDEHTIRAIG…VQSVERLHLL (123 aa)). ACT domains lie at 728–809 (EVLV…KALR) and 840–915 (VIEI…TVPR). Over residues 915 to 930 (RKVEEGAEQGAEKADA) the composition is skewed to basic and acidic residues. The tract at residues 915–936 (RKVEEGAEQGAEKADAGEIVAA) is disordered.

This sequence belongs to the GlnD family. It depends on Mg(2+) as a cofactor.

The enzyme catalyses [protein-PII]-L-tyrosine + UTP = [protein-PII]-uridylyl-L-tyrosine + diphosphate. It catalyses the reaction [protein-PII]-uridylyl-L-tyrosine + H2O = [protein-PII]-L-tyrosine + UMP + H(+). Its activity is regulated as follows. Uridylyltransferase (UTase) activity is inhibited by glutamine, while glutamine activates uridylyl-removing (UR) activity. Its function is as follows. Modifies, by uridylylation and deuridylylation, the PII regulatory proteins (GlnB and homologs), in response to the nitrogen status of the cell that GlnD senses through the glutamine level. Under low glutamine levels, catalyzes the conversion of the PII proteins and UTP to PII-UMP and PPi, while under higher glutamine levels, GlnD hydrolyzes PII-UMP to PII and UMP (deuridylylation). Thus, controls uridylylation state and activity of the PII proteins, and plays an important role in the regulation of nitrogen fixation and metabolism. In Rhodospirillum rubrum (strain ATCC 11170 / ATH 1.1.1 / DSM 467 / LMG 4362 / NCIMB 8255 / S1), this protein is Bifunctional uridylyltransferase/uridylyl-removing enzyme.